Consider the following 356-residue polypeptide: Histidinol-phosphate aminotransferase (356 aa).

Lys214 bears the N6-(pyridoxal phosphate)lysine mark.

This sequence belongs to the class-II pyridoxal-phosphate-dependent aminotransferase family. Histidinol-phosphate aminotransferase subfamily. Homodimer. Pyridoxal 5'-phosphate serves as cofactor.

It carries out the reaction L-histidinol phosphate + 2-oxoglutarate = 3-(imidazol-4-yl)-2-oxopropyl phosphate + L-glutamate. It functions in the pathway amino-acid biosynthesis; L-histidine biosynthesis; L-histidine from 5-phospho-alpha-D-ribose 1-diphosphate: step 7/9. This Escherichia coli O6:K15:H31 (strain 536 / UPEC) protein is Histidinol-phosphate aminotransferase.